A 582-amino-acid polypeptide reads, in one-letter code: Formate--tetrahydrofolate ligase (582 aa).

An ATP-binding site is contributed by Thr65 to Thr72.

This sequence belongs to the formate--tetrahydrofolate ligase family.

It catalyses the reaction (6S)-5,6,7,8-tetrahydrofolate + formate + ATP = (6R)-10-formyltetrahydrofolate + ADP + phosphate. The protein operates within one-carbon metabolism; tetrahydrofolate interconversion. The sequence is that of Formate--tetrahydrofolate ligase from Vibrio atlanticus (strain LGP32) (Vibrio splendidus (strain Mel32)).